The chain runs to 340 residues: Ferrochelatase (340 aa).

2 residues coordinate Fe cation: His-189 and Glu-292.

Belongs to the ferrochelatase family.

Its subcellular location is the cytoplasm. The catalysed reaction is heme b + 2 H(+) = protoporphyrin IX + Fe(2+). Its pathway is porphyrin-containing compound metabolism; protoheme biosynthesis; protoheme from protoporphyrin-IX: step 1/1. Its function is as follows. Catalyzes the ferrous insertion into protoporphyrin IX. This Pseudomonas syringae pv. syringae (strain B728a) protein is Ferrochelatase.